A 210-amino-acid polypeptide reads, in one-letter code: Putative protein-lysine deacylase ABHD14B (210 aa).

Alanine 2 bears the N-acetylalanine mark. Serine 91 carries the post-translational modification Phosphoserine. Residues serine 111, aspartate 162, and histidine 188 each act as charge relay system in the active site.

This sequence belongs to the AB hydrolase superfamily. ABHD14 family. In terms of assembly, may interact with TAF1.

The protein resides in the cytoplasm. The protein localises to the nucleus. The catalysed reaction is L-lysyl-[protein] + acetyl-CoA = N(6)-acetyl-L-lysyl-[protein] + CoA + H(+). Functionally, acts as an atypical protein-lysine deacetylase in vitro. Catalyzes the deacetylation of lysine residues using CoA as substrate, generating acetyl-CoA and the free amine of protein-lysine residues. Additional experiments are however required to confirm the protein-lysine deacetylase activity in vivo. Has hydrolase activity towards various surrogate p-nitrophenyl (pNp) substrates, such as pNp-butyrate, pNp-acetate and pNp-octanoate in vitro, with a strong preference for pNp-acetate. May activate transcription. This Pongo abelii (Sumatran orangutan) protein is Putative protein-lysine deacylase ABHD14B.